A 119-amino-acid chain; its full sequence is uncharacterized protein (119 aa).

It to Synechocystis PCC 6803 slr0903.

This is an uncharacterized protein from Methanocaldococcus jannaschii (strain ATCC 43067 / DSM 2661 / JAL-1 / JCM 10045 / NBRC 100440) (Methanococcus jannaschii).